The chain runs to 90 residues: Acylphosphatase (90 aa).

One can recognise an Acylphosphatase-like domain in the interval 5–90; that stretch reads GCKVIVSGIV…YQKTNDFIAC (86 aa). Active-site residues include Arg20 and Asn38.

It belongs to the acylphosphatase family.

It carries out the reaction an acyl phosphate + H2O = a carboxylate + phosphate + H(+). The polypeptide is Acylphosphatase (acyP) (Psychromonas ingrahamii (strain DSM 17664 / CCUG 51855 / 37)).